We begin with the raw amino-acid sequence, 218 residues long: Ribonuclease T (218 aa).

Residues 22 to 196 (VVVDVETAGF…YDAMKTAELF (175 aa)) enclose the Exonuclease domain. Mg(2+)-binding residues include Asp-25, Glu-27, His-183, and Asp-188. His-183 acts as the Proton donor/acceptor in catalysis.

It belongs to the RNase T family. Homodimer. Mg(2+) serves as cofactor.

Functionally, trims short 3' overhangs of a variety of RNA species, leaving a one or two nucleotide 3' overhang. Responsible for the end-turnover of tRNA: specifically removes the terminal AMP residue from uncharged tRNA (tRNA-C-C-A). Also appears to be involved in tRNA biosynthesis. The polypeptide is Ribonuclease T (Hahella chejuensis (strain KCTC 2396)).